A 379-amino-acid chain; its full sequence is Putative F-box protein At2g33190 (379 aa).

Residues 6-53 enclose the F-box domain; the sequence is NGWSKLYPDLLRSIFESLSCLDFHRAGTVCSNWYAVSRSCPLYPWRIV.

This is Putative F-box protein At2g33190 from Arabidopsis thaliana (Mouse-ear cress).